Here is a 100-residue protein sequence, read N- to C-terminus: C-X-C motif chemokine 11 (100 aa).

Positions 1–21 are cleaved as a signal peptide; that stretch reads MNRKVTAIALAAIIWATAAQG. 2 cysteine pairs are disulfide-bonded: Cys30-Cys57 and Cys32-Cys74.

The protein belongs to the intercrine alpha (chemokine CxC) family. In terms of assembly, interacts with TNFAIP6 (via Link domain).

It localises to the secreted. Functionally, chemotactic for interleukin-activated T-cells but not unstimulated T-cells, neutrophils or monocytes. Induces calcium release in activated T-cells. Binds to CXCR3. May play an important role in CNS diseases which involve T-cell recruitment. May play a role in skin immune responses. In Mus musculus (Mouse), this protein is C-X-C motif chemokine 11 (Cxcl11).